Here is a 125-residue protein sequence, read N- to C-terminus: Holo-[acyl-carrier-protein] synthase (125 aa).

Positions 8 and 55 each coordinate Mg(2+).

The protein belongs to the P-Pant transferase superfamily. AcpS family. The cofactor is Mg(2+).

The protein localises to the cytoplasm. It catalyses the reaction apo-[ACP] + CoA = holo-[ACP] + adenosine 3',5'-bisphosphate + H(+). Transfers the 4'-phosphopantetheine moiety from coenzyme A to a Ser of acyl-carrier-protein. In Treponema pallidum (strain Nichols), this protein is Holo-[acyl-carrier-protein] synthase.